We begin with the raw amino-acid sequence, 326 residues long: Thiamine thiazole synthase (326 aa).

Substrate contacts are provided by residues C87, 108–109 (EA), G116, and V181. C215 is modified (2,3-didehydroalanine (Cys)). Substrate is bound by residues D217, H232, M284, and 294-296 (RMG).

It belongs to the THI4 family. In terms of assembly, homooctamer. The cofactor is Fe cation. During the catalytic reaction, a sulfide is transferred from Cys-215 to a reaction intermediate, generating a dehydroalanine residue.

It localises to the cytoplasm. The protein localises to the nucleus. The enzyme catalyses [ADP-thiazole synthase]-L-cysteine + glycine + NAD(+) = [ADP-thiazole synthase]-dehydroalanine + ADP-5-ethyl-4-methylthiazole-2-carboxylate + nicotinamide + 3 H2O + 2 H(+). Involved in biosynthesis of the thiamine precursor thiazole. Catalyzes the conversion of NAD and glycine to adenosine diphosphate 5-(2-hydroxyethyl)-4-methylthiazole-2-carboxylic acid (ADT), an adenylated thiazole intermediate. The reaction includes an iron-dependent sulfide transfer from a conserved cysteine residue of the protein to a thiazole intermediate. The enzyme can only undergo a single turnover, which suggests it is a suicide enzyme. May have additional roles in adaptation to various stress conditions and in DNA damage tolerance. The sequence is that of Thiamine thiazole synthase from Sclerotinia sclerotiorum (strain ATCC 18683 / 1980 / Ss-1) (White mold).